Here is a 217-residue protein sequence, read N- to C-terminus: Small ribosomal subunit protein uS3 (217 aa).

The 69-residue stretch at 38–106 (VRKYIETALK…RVHINIIEIK (69 aa)) folds into the KH type-2 domain.

Belongs to the universal ribosomal protein uS3 family. As to quaternary structure, part of the 30S ribosomal subunit. Forms a tight complex with proteins S10 and S14.

Functionally, binds the lower part of the 30S subunit head. Binds mRNA in the 70S ribosome, positioning it for translation. This chain is Small ribosomal subunit protein uS3, found in Lysinibacillus sphaericus (strain C3-41).